An 82-amino-acid polypeptide reads, in one-letter code: UPF0213 protein SERP0126 (82 aa).

Residues 2-77 (DKHFVYIVKC…KTYTRQQKLK (76 aa)) form the GIY-YIG domain.

It belongs to the UPF0213 family.

In Staphylococcus epidermidis (strain ATCC 35984 / DSM 28319 / BCRC 17069 / CCUG 31568 / BM 3577 / RP62A), this protein is UPF0213 protein SERP0126.